The sequence spans 103 residues: Small ribosomal subunit protein uS10 (103 aa).

This sequence belongs to the universal ribosomal protein uS10 family. Part of the 30S ribosomal subunit.

Its function is as follows. Involved in the binding of tRNA to the ribosomes. This chain is Small ribosomal subunit protein uS10, found in Shewanella loihica (strain ATCC BAA-1088 / PV-4).